The chain runs to 888 residues: Probable disease resistance protein At5g63020 (888 aa).

Residues 22–66 are a coiled coil; the sequence is LNRNGDYIHGLEENLTALQRALEQIEQRREDLLRKILSEERRGLQ. Residues 139 to 442 enclose the NB-ARC domain; that stretch reads AERVDAARVE…GEGFIDRNKG (304 aa). 181–188 is a binding site for ATP; sequence GMGGVGKT. LRR repeat units lie at residues 512 to 533, 534 to 555, 558 to 580, 582 to 604, and 605 to 627; these read VARRVSLMFNNIESIRDAPESP, QLITLLLRKNFLGHISSSFFRL, MLVVLDLSMNRDLRHLPNEISEC, SLQYLSLSRTRIRIWPAGLVELR, and KLLYLNLEYTRMVESICGISGLT.

Belongs to the disease resistance NB-LRR family.

Probable disease resistance protein. The sequence is that of Probable disease resistance protein At5g63020 from Arabidopsis thaliana (Mouse-ear cress).